The primary structure comprises 368 residues: Peptide chain release factor 2 (368 aa).

The residue at position 245 (glutamine 245) is an N5-methylglutamine.

It belongs to the prokaryotic/mitochondrial release factor family. Post-translationally, methylated by PrmC. Methylation increases the termination efficiency of RF2.

The protein localises to the cytoplasm. Its function is as follows. Peptide chain release factor 2 directs the termination of translation in response to the peptide chain termination codons UGA and UAA. The polypeptide is Peptide chain release factor 2 (prfB) (Treponema pallidum (strain Nichols)).